Reading from the N-terminus, the 353-residue chain is Peroxidase C1A (353 aa).

Positions 1–30 (MHFSSSSTLFTCITLIPLVCLILHASLSDA) are cleaved as a signal peptide. Gln-31 carries the post-translational modification Pyrrolidone carboxylic acid. 4 cysteine pairs are disulfide-bonded: Cys-41/Cys-121, Cys-74/Cys-79, Cys-127/Cys-331, and Cys-207/Cys-239. The N-linked (GlcNAc...) asparagine glycan is linked to Asn-43. The active-site Proton acceptor is the His-72. Residues Asp-73, Val-76, Gly-78, Asp-80, and Ser-82 each coordinate Ca(2+). N-linked (GlcNAc...) asparagine glycosylation occurs at Asn-87. Position 94 (Glu-94) interacts with Ca(2+). Pro-169 is a substrate binding site. Asn-188 carries an N-linked (GlcNAc...) asparagine glycan. His-200 is a binding site for heme b. Position 201 (Thr-201) interacts with Ca(2+). Residues Asn-216, Asn-228, and Asn-244 are each glycosylated (N-linked (GlcNAc...) asparagine). Ca(2+) contacts are provided by Asp-252, Thr-255, and Asp-260. 2 N-linked (GlcNAc...) asparagine glycosylation sites follow: Asn-285 and Asn-298. Residues 339-353 (LLHDMVEVVDFVSSM) constitute a propeptide that is removed on maturation.

The protein belongs to the peroxidase family. Classical plant (class III) peroxidase subfamily. In terms of assembly, monomer. Requires Ca(2+) as cofactor. The cofactor is heme b.

Its subcellular location is the secreted. The protein localises to the vacuole. It catalyses the reaction 2 a phenolic donor + H2O2 = 2 a phenolic radical donor + 2 H2O. In terms of biological role, removal of H(2)O(2), oxidation of toxic reductants, biosynthesis and degradation of lignin, suberization, auxin catabolism, response to environmental stresses such as wounding, pathogen attack and oxidative stress. These functions might be dependent on each isozyme/isoform in each plant tissue. The chain is Peroxidase C1A (PRXC1A) from Armoracia rusticana (Horseradish).